Here is a 4194-residue protein sequence, read N- to C-terminus: Hybrid PKS-NRPS synthetase pydA (4194 aa).

In terms of domain architecture, Ketosynthase family 3 (KS3) spans 14–450; that stretch reads REPIAVVGSG…GTNAHAIVEN (437 aa). Residues Cys-187, His-326, and His-370 each act as for beta-ketoacyl synthase activity in the active site. Residues 565–887 enclose the Malonyl-CoA:ACP transacylase (MAT) domain; the sequence is VFTGQGAQWA…QRGKDDVQAF (323 aa). The interval 953–1088 is N-terminal hotdog fold; it reads HPLLGTRTTD…GRVIVITGEA (136 aa). The PKS/mFAS DH domain occupies 953-1257; it reads HPLLGTRTTD…VVSFSEPTAE (305 aa). Catalysis depends on His-985, which acts as the Proton acceptor; for dehydratase activity. Residues 1103–1257 are C-terminal hotdog fold; that stretch reads LVDIPEDRFY…VVSFSEPTAE (155 aa). The Proton donor; for dehydratase activity role is filled by Asp-1163. A methyltransferase (cMeT) domain region spans residues 1302-1596; it reads YMRQLASLFP…FSGVDSTTHE (295 aa). Positions 2141 to 2314 constitute a Ketoreductase (KR) domain; sequence TYVFFGLTSD…AGSILHIGAV (174 aa). The region spanning 2421 to 2505 is the Carrier 1 domain; it reads TTAEEALEIV…ELVEFAVENM (85 aa). At Ser-2465 the chain carries O-(pantetheine 4'-phosphoryl)serine. The disordered stretch occupies residues 2512 to 2583; the sequence is NMSDSLNAVP…ERDSSTASLE (72 aa). Residues 2526 to 2547 are compositionally biased toward low complexity; it reads APVIPASPPSGSVSSAPSSDPP. A compositionally biased stretch (polar residues) spans 2550–2565; sequence TAETSQHLSESSSKTS. Residues 2566–2577 are compositionally biased toward basic and acidic residues; the sequence is QPDEKQSEERDS. A condensation region spans residues 2591-3023; it reads EKVLPVSPGQ…QILKDVSLFT (433 aa). An adenylation region spans residues 3056 to 3467; it reads ANPPQEIALR…RIEGDTQIKL (412 aa). One can recognise a Carrier 2 domain in the interval 3580–3660; that stretch reads TQLTEAESEL…AMAAVIQDLS (81 aa). An O-(pantetheine 4'-phosphoryl)serine modification is found at Ser-3620. The Thioester reductase (TE) domain maps to 3701 to 3920; the sequence is ITGATGFLGK…VDLISVERAA (220 aa). 2 disordered regions span residues 4031 to 4110 and 4163 to 4194; these read RRDK…DEQI and KGEY…EPDD. Basic and acidic residues predominate over residues 4057–4072; that stretch reads RGRDVSPRHPALDHPD. The span at 4174–4183 shows a compositional bias: acidic residues; that stretch reads EEAEEAEWQC. The span at 4184-4194 shows a compositional bias: basic and acidic residues; sequence DEGHGDGEPDD.

It in the C-terminal section; belongs to the NRP synthetase family. It depends on pantetheine 4'-phosphate as a cofactor.

It functions in the pathway mycotoxin biosynthesis. Its function is as follows. Hybrid PKS-NRPS synthetase; part of the gene cluster that mediates the biosynthesis of pyrrocidines, fungal natural products containing a macrocyclic para-cyclophane connected to a decahydrofluorene ring system that show potent antibiotic activities toward Gram-negative bacteria. Within the pathway, the PKS-NRPS pydA, with the help of the trans-enoyl reductase pydC, synthesize the polyketide-tyrosyl acyl thioester product which can be reductively off-loaded by the terminal reductase (R) domain in pydA. The PKS module of pydA acts in combination with the trans-acting enoyl reductase pydC to produce a methylated polyketide attached to the ACP domain. In parallel, the adenylation (A) domain of the NRPS module activated L-tyrosine, which is then transferred to the ACP domain. The condensation (C) domain subsequently link this group to the polyketide chain, forming an enzyme-bound amide. The alpha/beta hydrolase pydG is then required to catalyze the subsequent Knoevenagel condensation that affords the 3-pyrrolin-2-one ring, whereas the four proteins pydB, pydE, pydX and pydZ then function synergistically to form the cyclophane. PydB and the membrane-bound pydX and pydZ are lipid-binding proteins that can sequester and mold the pdyG product into the inverse S-shape. Binding of the medium chain reductase pydE to the complex would trigger the cascade oxidative cyclization. PydY is involved in the Diels-Alder cycloaddition that forms the decahydrofluorene core. Additional non-enzymatic hydroxylation yields pyrrocidine A2 which can be further reduced into pyrrocidine B by an endogenous reductase. This chain is Hybrid PKS-NRPS synthetase pydA, found in Acremonium sp.